Reading from the N-terminus, the 190-residue chain is CDP-diacylglycerol--glycerol-3-phosphate 3-phosphatidyltransferase (190 aa).

At 6 to 17 (GVFNIPMYLTLF) the chain is on the cytoplasmic side. A helical membrane pass occupies residues 18–42 (RIIMVPCFVAVFYWPIYWSPMLCTL). Residues 43–65 (IFFIAAITDWFDGFLARRWNQTS) are Periplasmic-facing. Residues 66–86 (RIGGFLDPIADKIMIITALIL) form a helical membrane-spanning segment. Residues 87–91 (ISEHF) lie on the Cytoplasmic side of the membrane. A helical transmembrane segment spans residues 92–112 (HVWWMTLPISSIIIREILISS). Residues 113 to 150 (LRECIARVDNKNNISVIWLSKVKTFAQMLALIALLCRL) are Periplasmic-facing. Residues 151–173 (NEWTVIMGVISLYTAMLLTLWSM) form a helical membrane-spanning segment. Over 174–186 (CYYVYSVSSILLQ) the chain is Cytoplasmic.

The protein belongs to the CDP-alcohol phosphatidyltransferase class-I family.

The protein localises to the cell inner membrane. It carries out the reaction a CDP-1,2-diacyl-sn-glycerol + sn-glycerol 3-phosphate = a 1,2-diacyl-sn-glycero-3-phospho-(1'-sn-glycero-3'-phosphate) + CMP + H(+). Its pathway is phospholipid metabolism; phosphatidylglycerol biosynthesis; phosphatidylglycerol from CDP-diacylglycerol: step 1/2. Its function is as follows. Catalyzes the conversion of cytidine diphosphate diacylglycerol (CDP-DG) and glycerol 3-phosphate into phosphatidylglycerol. Essential for the synthesis of anionic phospholipids, thereby playing a role in balancing the ratio of zwitterionic and anionic phospholipids, which is thought to be important for normal membrane function. This is CDP-diacylglycerol--glycerol-3-phosphate 3-phosphatidyltransferase from Blochmanniella floridana.